The following is a 221-amino-acid chain: Keratin-associated protein 10-3 (221 aa).

A run of 18 repeats spans residues 26–30 (CCEPP), 31–35 (CCATS), 36–40 (CCAPA), 57–61 (CCQAA), 79–83 (CCQQS), 89–93 (CCTSS), 99–103 (CCVPV), 104–108 (CCKPV), 109–113 (CCVPV), 114–118 (CCKPV), 119–123 (CCKPI), 124–128 (CCVPV), 136–140 (CCQQS), 146–150 (CCTTS), 151–155 (CCRPS), 177–181 (CCAPA), 188–192 (CCRPA), and 210–214 (CCGLS). Residues 26-214 (CCEPPCCATS…RLSSACCGLS (189 aa)) are 18 X 5 AA repeats of C-C-X(3).

Belongs to the KRTAP type 10 family. Interacts with hair keratins. As to expression, restricted to a narrow region of the hair fiber cuticle, lying approximately 20 cell layers above the apex of the dermal papilla of the hair root; not detected in any other tissues.

In the hair cortex, hair keratin intermediate filaments are embedded in an interfilamentous matrix, consisting of hair keratin-associated proteins (KRTAP), which are essential for the formation of a rigid and resistant hair shaft through their extensive disulfide bond cross-linking with abundant cysteine residues of hair keratins. The matrix proteins include the high-sulfur and high-glycine-tyrosine keratins. In Homo sapiens (Human), this protein is Keratin-associated protein 10-3 (KRTAP10-3).